We begin with the raw amino-acid sequence, 508 residues long: ATP synthase subunit alpha, chloroplastic (508 aa).

Residue Gly-172–Thr-179 coordinates ATP.

It belongs to the ATPase alpha/beta chains family. As to quaternary structure, F-type ATPases have 2 components, CF(1) - the catalytic core - and CF(0) - the membrane proton channel. CF(1) has five subunits: alpha(3), beta(3), gamma(1), delta(1), epsilon(1). CF(0) has four main subunits: a, b, b' and c.

The protein resides in the plastid. Its subcellular location is the chloroplast thylakoid membrane. It catalyses the reaction ATP + H2O + 4 H(+)(in) = ADP + phosphate + 5 H(+)(out). Its function is as follows. Produces ATP from ADP in the presence of a proton gradient across the membrane. The alpha chain is a regulatory subunit. The chain is ATP synthase subunit alpha, chloroplastic from Angiopteris evecta (Mule's foot fern).